The sequence spans 168 residues: Phosphopantetheine adenylyltransferase (168 aa).

Thr14 is a binding site for substrate. Residues 14 to 15 (TF) and His22 contribute to the ATP site. The substrate site is built by Lys46, Leu78, and Arg92. Residues 93–95 (GLR), Glu103, and 128–134 (YSFISSS) contribute to the ATP site.

Belongs to the bacterial CoaD family. As to quaternary structure, homohexamer. Mg(2+) is required as a cofactor.

It localises to the cytoplasm. The enzyme catalyses (R)-4'-phosphopantetheine + ATP + H(+) = 3'-dephospho-CoA + diphosphate. Its pathway is cofactor biosynthesis; coenzyme A biosynthesis; CoA from (R)-pantothenate: step 4/5. In terms of biological role, reversibly transfers an adenylyl group from ATP to 4'-phosphopantetheine, yielding dephospho-CoA (dPCoA) and pyrophosphate. The sequence is that of Phosphopantetheine adenylyltransferase from Xanthomonas euvesicatoria pv. vesicatoria (strain 85-10) (Xanthomonas campestris pv. vesicatoria).